Reading from the N-terminus, the 118-residue chain is MRHKHGYRKLGRTSSHRSALLKNLAIAIIKSEKIETTLPKAKELRSYVEKLITRARKGDSNAHRAVFASLQDKETTNKLVTEVAPKFKERNGGYTRIIKTRVRRGDAAEMAYIELVAE.

It belongs to the bacterial ribosomal protein bL17 family. Part of the 50S ribosomal subunit. Contacts protein L32.

The polypeptide is Large ribosomal subunit protein bL17 (Campylobacter concisus (strain 13826)).